We begin with the raw amino-acid sequence, 302 residues long: MAGRELSHLQQLEAESIQIIREVAAEFDNPVMLYSIGKDSSVMLHLARKAFYPGKIPFPLLHVDTGWKFKEMIAFRDAQAKKFGFELLTHTNPEGVAQGINPFDHGSAKHTDIMKTQGLKQALNQYGFDAAFGGARRDEEKSRAKERVYSFRDRHHRWDPKNQRPELWRTYNGAVNKGESIRVFPLSNWTELDIWQYIYQENIELVPLYFAAERPVVERAGQLIMADDERMKLEEGEAIKYEVVRFRTLGCYPLTAAMHSQADNLEKIIEEMLLTRSSERQGRLIDSDQSASMEQKKRQGYF.

The disordered stretch occupies residues 280-302 (RQGRLIDSDQSASMEQKKRQGYF).

This sequence belongs to the PAPS reductase family. CysD subfamily. Heterodimer composed of CysD, the smaller subunit, and CysN.

It carries out the reaction sulfate + ATP + H(+) = adenosine 5'-phosphosulfate + diphosphate. The protein operates within sulfur metabolism; hydrogen sulfide biosynthesis; sulfite from sulfate: step 1/3. With CysN forms the ATP sulfurylase (ATPS) that catalyzes the adenylation of sulfate producing adenosine 5'-phosphosulfate (APS) and diphosphate, the first enzymatic step in sulfur assimilation pathway. APS synthesis involves the formation of a high-energy phosphoric-sulfuric acid anhydride bond driven by GTP hydrolysis by CysN coupled to ATP hydrolysis by CysD. The polypeptide is Sulfate adenylyltransferase subunit 2 (Shewanella oneidensis (strain ATCC 700550 / JCM 31522 / CIP 106686 / LMG 19005 / NCIMB 14063 / MR-1)).